A 261-amino-acid polypeptide reads, in one-letter code: tRNA 5-carboxymethoxyuridine methyltransferase (261 aa).

Residues arginine 26, 52 to 53 (GG), aspartate 73, 102 to 103 (AQ), and histidine 119 contribute to the S-adenosyl-L-methionine site.

Belongs to the class I-like SAM-binding methyltransferase superfamily. CmoM family.

The enzyme catalyses 5-carboxymethoxyuridine(34) in tRNA + S-adenosyl-L-methionine = 5-methoxycarbonylmethoxyuridine(34) in tRNA + S-adenosyl-L-homocysteine. Its function is as follows. Catalyzes the methylation of 5-carboxymethoxyuridine (cmo5U) to form 5-methoxycarbonylmethoxyuridine (mcmo5U) at position 34 in tRNAs. Four tRNAs (tRNA(Ala1), tRNA(Ser1), tRNA(Pro3) and tRNA(Thr4)) are fully modified with mcmo5U in stationary-phase E.coli. Also present at low frequency in tRNA(Leu3) and tRNA(Val1). The chain is tRNA 5-carboxymethoxyuridine methyltransferase from Escherichia coli (strain K12).